A 136-amino-acid polypeptide reads, in one-letter code: uncharacterized protein (136 aa).

The protein localises to the mitochondrion. This is an uncharacterized protein from Marchantia polymorpha (Common liverwort).